The primary structure comprises 525 residues: Bifunctional purine biosynthesis protein PurH (525 aa).

An MGS-like domain is found at 1–148 (MPSNNLIKNA…KNYKNVIVIV (148 aa)).

The protein belongs to the PurH family.

It catalyses the reaction (6R)-10-formyltetrahydrofolate + 5-amino-1-(5-phospho-beta-D-ribosyl)imidazole-4-carboxamide = 5-formamido-1-(5-phospho-D-ribosyl)imidazole-4-carboxamide + (6S)-5,6,7,8-tetrahydrofolate. The catalysed reaction is IMP + H2O = 5-formamido-1-(5-phospho-D-ribosyl)imidazole-4-carboxamide. Its pathway is purine metabolism; IMP biosynthesis via de novo pathway; 5-formamido-1-(5-phospho-D-ribosyl)imidazole-4-carboxamide from 5-amino-1-(5-phospho-D-ribosyl)imidazole-4-carboxamide (10-formyl THF route): step 1/1. The protein operates within purine metabolism; IMP biosynthesis via de novo pathway; IMP from 5-formamido-1-(5-phospho-D-ribosyl)imidazole-4-carboxamide: step 1/1. In Buchnera aphidicola subsp. Acyrthosiphon pisum (strain 5A), this protein is Bifunctional purine biosynthesis protein PurH.